Consider the following 746-residue polypeptide: NAD(P)H-quinone oxidoreductase subunit 5, chloroplastic (746 aa).

15 helical membrane passes run 9-29 (WIIP…LLLV), 40-60 (WTFP…NLSI), 89-109 (IDPL…MVLI), 122-139 (LRFF…LGLV), 147-167 (IYIF…FWFT), 185-205 (GDFG…SFEF), 219-239 (NGVN…GAVA), 258-278 (TPIS…FLVA), 280-300 (LLPL…IGVI), 327-347 (LGYI…FHLI), 396-416 (TTFL…CFWS), 425-445 (WLYS…TAFY), 546-566 (LLPL…GIPF), 605-625 (IYSV…YGSI), and 722-742 (YLFV…FYFF).

The protein belongs to the complex I subunit 5 family. NDH is composed of at least 16 different subunits, 5 of which are encoded in the nucleus.

Its subcellular location is the plastid. It is found in the chloroplast thylakoid membrane. The catalysed reaction is a plastoquinone + NADH + (n+1) H(+)(in) = a plastoquinol + NAD(+) + n H(+)(out). It carries out the reaction a plastoquinone + NADPH + (n+1) H(+)(in) = a plastoquinol + NADP(+) + n H(+)(out). Its function is as follows. NDH shuttles electrons from NAD(P)H:plastoquinone, via FMN and iron-sulfur (Fe-S) centers, to quinones in the photosynthetic chain and possibly in a chloroplast respiratory chain. The immediate electron acceptor for the enzyme in this species is believed to be plastoquinone. Couples the redox reaction to proton translocation, and thus conserves the redox energy in a proton gradient. In Calycanthus floridus var. glaucus (Eastern sweetshrub), this protein is NAD(P)H-quinone oxidoreductase subunit 5, chloroplastic (ndhF).